The sequence spans 1475 residues: Nuclear pore complex protein Nup153 (1475 aa).

Residues 1–15 show a composition bias toward gly residues; sequence MASGAGGVGGGGGGK. 3 disordered regions span residues 1–37, 90–124, and 171–225; these read MASG…QQHQ, DEES…NYPD, and DSTS…TATS. N-acetylalanine is present on A2. Phosphothreonine is present on T102. Polar residues-rich tracts occupy residues 107–121 and 181–190; these read VSNT…TASN and ISTTSGFSSR. Residues S182, S185, S192, S203, and S209 each carry the phosphoserine modification. Residues 236-237 form repeat 1; it reads FG. A 29 X 2 AA repeats of F-G region spans residues 236–1418; it reads FGTLSPSLGN…NSPSGVFTFG (1183 aa). S240, S257, S297, S320, S330, S333, S334, S338, and S343 each carry phosphoserine. K353 is covalently cross-linked (Glycyl lysine isopeptide (Lys-Gly) (interchain with G-Cter in SUMO2)). Position 369 is a phosphothreonine (T369). K384 carries the post-translational modification N6-acetyllysine. A Phosphothreonine modification is found at T388. A phosphoserine mark is found at S500, S516, S518, S522, and S529. S534 and S544 each carry an O-linked (GlcNAc) serine glycan. T588 is modified (phosphothreonine). A phosphoserine mark is found at S607, S614, S619, and S633. Repeat unit 2 spans residues 652-653; sequence FG. The RanBP2-type 1 zinc finger occupies 657-687; the sequence is KAGSSWQCDTCLLQNKVTDNKCIACQAAKLS. The Zn(2+) site is built by C664, C667, C678, and C681. Phosphoserine is present on S687. Residues 715–716 form repeat 3; it reads FG. At K718 the chain carries N6-acetyllysine. The segment at 722–751 adopts a RanBP2-type 2 zinc-finger fold; that stretch reads VIGTWDCDTCLVQNKPEAIKCVACETPKPG. Positions 728, 731, 742, and 745 each coordinate Zn(2+). Copy 4 of the repeat occupies 786-787; the sequence is FG. RanBP2-type zinc fingers lie at residues 793 to 822 and 851 to 880; these read PIGS…EKPG and PEGS…AKPG. 8 residues coordinate Zn(2+): C799, C802, C813, C816, C857, C860, C871, and C874. Residue S891 is modified to Phosphoserine. Copy 5 of the repeat occupies 905–906; the sequence is FG. O-linked (GlcNAc) serine glycans are attached at residues S908 and S909. Repeat unit 6 spans residues 926-927; sequence FG. At K954 the chain carries N6-acetyllysine. Repeat copies occupy residues 961–962, 983–984, 1000–1001, 1024–1025, and 1084–1085. O-linked (GlcNAc) serine glycosylation occurs at S1113. 2 consecutive repeat copies span residues 1118 to 1119 and 1135 to 1136. A disordered region spans residues 1128–1167; that stretch reads KCQPVFSFGNSEQTKDENSSKSTFSFSMTKPSEKESEQPA. The span at 1147–1157 shows a compositional bias: low complexity; sequence SKSTFSFSMTK. A glycan (O-linked (GlcNAc) threonine) is linked at T1156. 11 tandem repeats follow at residues 1173 to 1174, 1212 to 1213, 1228 to 1229, 1240 to 1241, 1275 to 1276, 1289 to 1290, 1291 to 1292, 1306 to 1307, 1319 to 1320, 1327 to 1328, and 1341 to 1342. Residues 1311–1402 form a disordered region; that stretch reads SAPSASPAFG…SAFQFGSSTT (92 aa). The span at 1321 to 1335 shows a compositional bias: polar residues; that stretch reads ANQTPTFGQSQGASQ. 2 stretches are compositionally biased toward polar residues: residues 1343–1356 and 1363–1396; these read SISS…TGSQ and GTVS…SAFQ. The interval 1350–1475 is (Microbial infection) Interacts with HIV-1 capsid protein p24 (CA); that stretch reads LFPTGSQPAP…KIKTAVRRRK (126 aa). A run of 5 repeats spans residues 1362-1363, 1374-1375, 1383-1384, 1397-1398, and 1417-1418. Polar residues-rich tracts occupy residues 1420–1431 and 1438–1463; these read NSSTPAASAQPS and FNQS…TSFS. A disordered region spans residues 1420–1475; sequence NSSTPAASAQPSGSGGFPFNQSPAAFTVGSNGKNVFSSSGTSFSGRKIKTAVRRRK. Phosphoserine is present on residues S1457, S1461, and S1463. Residues 1465 to 1475 are compositionally biased toward basic residues; sequence RKIKTAVRRRK.

It belongs to the NUP153 family. Part of the nuclear pore complex (NPC). Interacts with TPR (via coiled coil region); the interaction is direct and provides a link between the core structure and the TPR-containing nuclear basket of the nuclear pore complex (NPC). Interacts with HIKESHI. Interacts with SENP2. Interacts with XPO5. Interacts with RAN; the interaction occurs in a GTP- and GDP-independent manner. Interacts with MCM3AP isoform GANP; this interaction is required for GANP localization at the nuclear pore complex. Interacts with MAPK1. As to quaternary structure, (Microbial infection) Interacts (via C-terminus) with HIV-1 capsid protein p24 (CA) (via N-terminus). In terms of assembly, (Microbial infection) Interacts with HIV-1 integrase; this interaction might play a role in nuclear import of HIV pre-integration complex. (Microbial infection) Interacts with hepatitis B virus capsid protein; this interaction probably plays a role in nuclear import of HBV genome. As to quaternary structure, (Microbial infection) Interacts with Epstein-barr virus BGLF4; this interaction allows BGLF4 nuclear entry. In terms of assembly, (Microbial infection) Interacts with HIV-2 virus protein vpx; this interaction might promote vpx nuclear entry. Zn(2+) is required as a cofactor. Post-translationally, phosphorylated in interphase, hyperphosphorylated during mitosis. May play a role in the reversible disassembly of the nuclear pore complex during mitosis. In terms of processing, proteolytically degraded after poliovirus (PV) infection; degradation is partial and NCP- and TPR-binding domains withstand degradation. O-glycosylated during cytokinesis at sites identical or close to phosphorylation sites, this interferes with the phosphorylation status.

The protein resides in the nucleus. It localises to the nucleus membrane. The protein localises to the nuclear pore complex. In terms of biological role, component of the nuclear pore complex (NPC), a complex required for the trafficking across the nuclear envelope. Functions as a scaffolding element in the nuclear phase of the NPC essential for normal nucleocytoplasmic transport of proteins and mRNAs. Involved in the quality control and retention of unspliced mRNAs in the nucleus; in association with TPR, regulates the nuclear export of unspliced mRNA species bearing constitutive transport element (CTE) in a NXF1- and KHDRBS1-independent manner. Mediates TPR anchoring to the nuclear membrane at NPC. The repeat-containing domain may be involved in anchoring other components of the NPC to the pore membrane. Possible DNA-binding subunit of the nuclear pore complex (NPC). (Microbial infection) Interacts with HIV-1 caspid protein P24 and thereby promotes the integration of the virus in the nucleus of non-dividing cells (in vitro). Its function is as follows. (Microbial infection) Binds HIV-2 protein vpx and thereby promotes the nuclear translocation of the lentiviral genome (in vitro). This is Nuclear pore complex protein Nup153 (NUP153) from Homo sapiens (Human).